The chain runs to 64 residues: Ferredoxin-2 (64 aa).

4Fe-4S ferredoxin-type domains lie at 3-31 (KYLYLDQDECMACESCVELCPEAFRMSSA) and 34-64 (YAEVIDPNTTAECVEDAISTCPVECIEWREE). Residues Cys-12, Cys-15, Cys-18, and Cys-54 each contribute to the [4Fe-4S] cluster site.

In terms of assembly, homodimer. [4Fe-4S] cluster is required as a cofactor.

In terms of biological role, ferredoxins are iron-sulfur proteins that transfer electrons in a wide variety of metabolic reactions. This chain is Ferredoxin-2, found in Nitratidesulfovibrio vulgaris (strain DSM 19637 / Miyazaki F) (Desulfovibrio vulgaris).